Consider the following 859-residue polypeptide: Mismatch repair endonuclease PMS2 (859 aa).

ATP contacts are provided by asparagine 45, aspartate 70, glutamate 109, alanine 110, and leucine 111. Disordered regions lie at residues glutamate 391–lysine 413, leucine 427–leucine 455, and arginine 469–aspartate 555. Composition is skewed to basic and acidic residues over residues leucine 427 to glutamate 439 and cysteine 485 to serine 495. Over residues glutamate 512 to serine 525 the composition is skewed to polar residues. The Nuclear localization signal signature appears at lysine 574–lysine 577. A disordered region spans residues threonine 578–threonine 597. Residues serine 583–threonine 597 are compositionally biased toward polar residues.

It belongs to the DNA mismatch repair MutL/HexB family. Heterodimer of PMS2 and MLH1 (MutL alpha); this interaction is required for the stability of both partners. Forms a ternary complex with MutS alpha (MSH2-MSH6) or MutS beta (MSH2-MSH3). Part of the BRCA1-associated genome surveillance complex (BASC), which contains BRCA1, MSH2, MSH6, MLH1, ATM, BLM, PMS2 and the RAD50-MRE11-NBS1 protein complex. This association could be a dynamic process changing throughout the cell cycle and within subnuclear domains. Interacts with MTMR15/FAN1.

It is found in the nucleus. It carries out the reaction ATP + H2O = ADP + phosphate + H(+). Its function is as follows. Component of the post-replicative DNA mismatch repair system (MMR). Heterodimerizes with MLH1 to form MutL alpha. DNA repair is initiated by MutS alpha (MSH2-MSH6) or MutS beta (MSH2-MSH3) binding to a dsDNA mismatch, then MutL alpha is recruited to the heteroduplex. Assembly of the MutL-MutS-heteroduplex ternary complex in presence of RFC and PCNA is sufficient to activate endonuclease activity of PMS2. It introduces single-strand breaks near the mismatch and thus generates new entry points for the exonuclease EXO1 to degrade the strand containing the mismatch. DNA methylation would prevent cleavage and therefore assure that only the newly mutated DNA strand is going to be corrected. MutL alpha (MLH1-PMS2) interacts physically with the clamp loader subunits of DNA polymerase III, suggesting that it may play a role to recruit the DNA polymerase III to the site of the MMR. Also implicated in DNA damage signaling, a process which induces cell cycle arrest and can lead to apoptosis in case of major DNA damages. Possesses an ATPase activity, but in the absence of gross structural changes, ATP hydrolysis may not be necessary for proficient mismatch repair. In Mus musculus (Mouse), this protein is Mismatch repair endonuclease PMS2.